The primary structure comprises 345 residues: S-adenosylmethionine:tRNA ribosyltransferase-isomerase (345 aa).

This sequence belongs to the QueA family. As to quaternary structure, monomer.

It is found in the cytoplasm. The catalysed reaction is 7-aminomethyl-7-carbaguanosine(34) in tRNA + S-adenosyl-L-methionine = epoxyqueuosine(34) in tRNA + adenine + L-methionine + 2 H(+). It participates in tRNA modification; tRNA-queuosine biosynthesis. In terms of biological role, transfers and isomerizes the ribose moiety from AdoMet to the 7-aminomethyl group of 7-deazaguanine (preQ1-tRNA) to give epoxyqueuosine (oQ-tRNA). The protein is S-adenosylmethionine:tRNA ribosyltransferase-isomerase of Thermus thermophilus (strain ATCC BAA-163 / DSM 7039 / HB27).